The sequence spans 441 residues: Transcriptional regulatory protein ZraR (441 aa).

In terms of domain architecture, Response regulatory spans 7–121 (DILVVDDDIS…NLQATLEKAL (115 aa)). At Asp56 the chain carries 4-aspartylphosphate. The region spanning 141-370 (MVGKSPAMQH…LENAVERAVV (230 aa)) is the Sigma-54 factor interaction domain. Residues Gly172, Thr173, Arg329, and Arg359 each coordinate ATP. Positions 421-440 (KTEAARQLGITRKTLLAKLS) form a DNA-binding region, H-T-H motif.

Post-translationally, phosphorylated by ZraS.

The protein resides in the cytoplasm. With respect to regulation, activity of the ZraS/ZraR two-component system is repressed by the zinc-bound form of ZraP, which probably interacts with the periplasmic region of ZraS. Functionally, part of the Zra signaling pathway, an envelope stress response (ESR) system composed of the periplasmic accessory protein ZraP, the histidine kinase ZraS and the transcriptional regulator ZraR. The ZraPSR system contributes to antibiotic resistance and is important for membrane integrity in the presence of membrane-targeting biocides. ZraR is a member of the two-component regulatory system ZraS/ZraR. When activated by ZraS, acts in conjunction with sigma-54 to regulate the expression of zraP in the presence of high Zn(2+) or Pb(2+) concentrations. Also positively autoregulates the expression of the zraSR operon. In Escherichia coli O157:H7, this protein is Transcriptional regulatory protein ZraR (zraR).